Reading from the N-terminus, the 415-residue chain is Phosphoribosylamine--glycine ligase (415 aa).

In terms of domain architecture, ATP-grasp spans 108 to 311; the sequence is KKIMEKYNIP…LMQHIIDLDE (204 aa). 134 to 191 contacts ATP; the sequence is IENCELPVVVKKDGLAAGKGVIIADTIEAARSAIEIMYGDEEEGTVVFETFLEGEEFS. Glu281 and Asn283 together coordinate Mg(2+).

Belongs to the GARS family. Mg(2+) is required as a cofactor. Requires Mn(2+) as cofactor.

It catalyses the reaction 5-phospho-beta-D-ribosylamine + glycine + ATP = N(1)-(5-phospho-beta-D-ribosyl)glycinamide + ADP + phosphate + H(+). It participates in purine metabolism; IMP biosynthesis via de novo pathway; N(1)-(5-phospho-D-ribosyl)glycinamide from 5-phospho-alpha-D-ribose 1-diphosphate: step 2/2. In Staphylococcus aureus (strain MW2), this protein is Phosphoribosylamine--glycine ligase.